A 178-amino-acid chain; its full sequence is Interleukin-10 (178 aa).

The signal sequence occupies residues 1–18 (MHSSALLCCLVLLTGVRA). Intrachain disulfides connect Cys-30/Cys-126 and Cys-80/Cys-132. N-linked (GlcNAc...) asparagine glycosylation occurs at Asn-134.

This sequence belongs to the IL-10 family. Homodimer. Interacts with IL10RA and IL10RB.

The protein localises to the secreted. Functionally, major immune regulatory cytokine that acts on many cells of the immune system where it has profound anti-inflammatory functions, limiting excessive tissue disruption caused by inflammation. Mechanistically, IL10 binds to its heterotetrameric receptor comprising IL10RA and IL10RB leading to JAK1 and STAT2-mediated phosphorylation of STAT3. In turn, STAT3 translocates to the nucleus where it drives expression of anti-inflammatory mediators. Targets antigen-presenting cells (APCs) such as macrophages and monocytes and inhibits their release of pro-inflammatory cytokines including granulocyte-macrophage colony-stimulating factor /GM-CSF, granulocyte colony-stimulating factor/G-CSF, IL-1 alpha, IL-1 beta, IL-6, IL-8 and TNF-alpha. Also interferes with antigen presentation by reducing the expression of MHC-class II and co-stimulatory molecules, thereby inhibiting their ability to induce T cell activation. In addition, controls the inflammatory response of macrophages by reprogramming essential metabolic pathways including mTOR signaling. In Pan troglodytes (Chimpanzee), this protein is Interleukin-10 (IL10).